An 89-amino-acid chain; its full sequence is Small ribosomal subunit protein uS15 (89 aa).

This sequence belongs to the universal ribosomal protein uS15 family. Part of the 30S ribosomal subunit. Forms a bridge to the 50S subunit in the 70S ribosome, contacting the 23S rRNA.

One of the primary rRNA binding proteins, it binds directly to 16S rRNA where it helps nucleate assembly of the platform of the 30S subunit by binding and bridging several RNA helices of the 16S rRNA. In terms of biological role, forms an intersubunit bridge (bridge B4) with the 23S rRNA of the 50S subunit in the ribosome. The protein is Small ribosomal subunit protein uS15 of Vibrio parahaemolyticus serotype O3:K6 (strain RIMD 2210633).